The sequence spans 725 residues: Putative coiled-coil domain-containing protein 144B (725 aa).

The segment covering 1 to 11 (MASWGGEKRGG) has biased composition (basic and acidic residues). Disordered stretches follow at residues 1–25 (MASWGGEKRGGAEGSPKLAVYATRK), 87–188 (AARS…NLTE), 213–260 (LPEN…DCDR), 453–485 (NMNQNSDSGSTNNYKSLKPKLENLSSLPPDSDR), and 528–586 (EEEM…KVKN). Composition is skewed to polar residues over residues 129-150 (PESLPQNNNPDWHPTNLTLSDE) and 165-178 (PSVSPSMPENQSAT). The stretch at 215-244 (ENKESKEAEQDLELTSEEEQERLKGCENKQ) forms a coiled coil. Residues 224 to 234 (QDLELTSEEEQ) show a composition bias toward acidic residues. The segment covering 453 to 467 (NMNQNSDSGSTNNYK) has biased composition (polar residues). Residues 490 to 546 (YLHEELQQDMQKFKNEVNTLEEEFLALKKENVQLHKEVEEEMEKHRSNSTELSGTLT) are a coiled coil. Over residues 528–537 (EEEMEKHRSN) the composition is skewed to basic and acidic residues. Residues 543–552 (GTLTDGTTVG) show a composition bias toward low complexity. The segment covering 563 to 583 (PRKENEEHDRPADKTANEKNK) has biased composition (basic and acidic residues). Positions 648-713 (LLKLKNNHCD…ALKQENGRKE (66 aa)) form a coiled coil.

Belongs to the CCDC144 family.

The chain is Putative coiled-coil domain-containing protein 144B from Homo sapiens (Human).